We begin with the raw amino-acid sequence, 66 residues long: Large ribosomal subunit protein bL33c (66 aa).

Belongs to the bacterial ribosomal protein bL33 family.

Its subcellular location is the plastid. The chain is Large ribosomal subunit protein bL33c (rpl33) from Epifagus virginiana (Beechdrops).